Consider the following 481-residue polypeptide: MSIQVHDTLTAQKRELVPLEPGKLRLYVCGPTVYDYSHLGHARCYVVWDVVVRHLRARGLEVRFVRNFTDVDDKIIQRANERGEDPIALASRFADAFHEDMDALGNLRPDVEPRVSGHIPEIVALIARLVERGFAYAPGNGDVYYAVRKFPEYGRLSKRNLDDLIAGARVEPGEAKRDPLDFALWKAAKPGEPAWESPWGKGRPGWHIECSAMTQKHLGAPIDLHAGGKDLVFPHHTNEIAQSVAATSDGLHAEDFARYWMHNGFVQIDDEKMSKSLGNFFTIRDVLARFDGEALRFFLLGTHYRRDFNFSDQVLAEAERRLSALYETVEKAERLGAGAAPAAEPAFVERARAALDDDFNTPQVLGIVAEAFTEANALADRKGKKSPEEKARLAAFARGARAVGAVLGILDRPPAQALSAIRDRAAARRGIDGGEVERSIAERAAARAAKDFARSDAIRDALLARGVVLMDGPQGTTWKVE.

Cys-29 serves as a coordination point for Zn(2+). Positions 31 to 41 match the 'HIGH' region motif; it reads PTVYDYSHLGH. Residues Cys-210, His-235, and Glu-239 each contribute to the Zn(2+) site. Positions 272–276 match the 'KMSKS' region motif; sequence KMSKS. Position 275 (Lys-275) interacts with ATP.

This sequence belongs to the class-I aminoacyl-tRNA synthetase family. As to quaternary structure, monomer. Zn(2+) serves as cofactor.

It localises to the cytoplasm. The enzyme catalyses tRNA(Cys) + L-cysteine + ATP = L-cysteinyl-tRNA(Cys) + AMP + diphosphate. This is Cysteine--tRNA ligase from Anaeromyxobacter sp. (strain K).